The chain runs to 250 residues: Uracil-DNA glycosylase (250 aa).

The active-site Proton acceptor is Asp91.

This sequence belongs to the uracil-DNA glycosylase (UDG) superfamily. UNG family.

The protein resides in the host nucleus. The enzyme catalyses Hydrolyzes single-stranded DNA or mismatched double-stranded DNA and polynucleotides, releasing free uracil.. In terms of biological role, excises uracil residues from the DNA which can arise as a result of misincorporation of dUMP residues by DNA polymerase or due to deamination of cytosine. Excises uracil residues from the DNA which can arise as a result of misincorporation of dUMP residues by DNA polymerase or deamination of cytosines. Therefore may reduce deleterious uracil incorporation into the viral genome, particularly in terminally differentiated cells which lack DNA repair enzymes. The protein is Uracil-DNA glycosylase (UL114) of Homo sapiens (Human).